We begin with the raw amino-acid sequence, 576 residues long: Arginine--tRNA ligase (576 aa).

The short motif at 122 to 132 (PNVAKQMHVGH) is the 'HIGH' region element.

Belongs to the class-I aminoacyl-tRNA synthetase family. Monomer.

Its subcellular location is the cytoplasm. The enzyme catalyses tRNA(Arg) + L-arginine + ATP = L-arginyl-tRNA(Arg) + AMP + diphosphate. The protein is Arginine--tRNA ligase of Yersinia pseudotuberculosis serotype IB (strain PB1/+).